The chain runs to 959 residues: Glycine dehydrogenase (decarboxylating) (959 aa).

Residue K708 is modified to N6-(pyridoxal phosphate)lysine.

This sequence belongs to the GcvP family. As to quaternary structure, the glycine cleavage system is composed of four proteins: P, T, L and H. It depends on pyridoxal 5'-phosphate as a cofactor.

The enzyme catalyses N(6)-[(R)-lipoyl]-L-lysyl-[glycine-cleavage complex H protein] + glycine + H(+) = N(6)-[(R)-S(8)-aminomethyldihydrolipoyl]-L-lysyl-[glycine-cleavage complex H protein] + CO2. The glycine cleavage system catalyzes the degradation of glycine. The P protein binds the alpha-amino group of glycine through its pyridoxal phosphate cofactor; CO(2) is released and the remaining methylamine moiety is then transferred to the lipoamide cofactor of the H protein. In Serratia proteamaculans (strain 568), this protein is Glycine dehydrogenase (decarboxylating).